The sequence spans 81 residues: Photosystem I iron-sulfur center (81 aa).

4Fe-4S ferredoxin-type domains lie at 2–31 (SHSV…MIPW) and 39–68 (IAPA…VRVY). Cys-11, Cys-14, Cys-17, Cys-21, Cys-48, Cys-51, Cys-54, and Cys-58 together coordinate [4Fe-4S] cluster.

In terms of assembly, the eukaryotic PSI reaction center is composed of at least 11 subunits. Requires [4Fe-4S] cluster as cofactor.

It localises to the plastid. The protein localises to the chloroplast thylakoid membrane. The enzyme catalyses reduced [plastocyanin] + hnu + oxidized [2Fe-2S]-[ferredoxin] = oxidized [plastocyanin] + reduced [2Fe-2S]-[ferredoxin]. Apoprotein for the two 4Fe-4S centers FA and FB of photosystem I (PSI); essential for photochemical activity. FB is the terminal electron acceptor of PSI, donating electrons to ferredoxin. The C-terminus interacts with PsaA/B/D and helps assemble the protein into the PSI complex. Required for binding of PsaD and PsaE to PSI. PSI is a plastocyanin-ferredoxin oxidoreductase, converting photonic excitation into a charge separation, which transfers an electron from the donor P700 chlorophyll pair to the spectroscopically characterized acceptors A0, A1, FX, FA and FB in turn. This chain is Photosystem I iron-sulfur center, found in Liriodendron tulipifera (Tuliptree).